Reading from the N-terminus, the 239-residue chain is DNA repair protein RecO (239 aa).

This sequence belongs to the RecO family.

In terms of biological role, involved in DNA repair and RecF pathway recombination. This is DNA repair protein RecO from Stenotrophomonas maltophilia (strain R551-3).